A 362-amino-acid polypeptide reads, in one-letter code: Chorismate synthase (362 aa).

NADP(+)-binding residues include R48 and R54. FMN contacts are provided by residues 131 to 133, 243 to 244, G287, 302 to 306, and R328; these read RSS, NA, and KPTSS.

Belongs to the chorismate synthase family. In terms of assembly, homotetramer. FMNH2 serves as cofactor.

The catalysed reaction is 5-O-(1-carboxyvinyl)-3-phosphoshikimate = chorismate + phosphate. Its pathway is metabolic intermediate biosynthesis; chorismate biosynthesis; chorismate from D-erythrose 4-phosphate and phosphoenolpyruvate: step 7/7. Catalyzes the anti-1,4-elimination of the C-3 phosphate and the C-6 proR hydrogen from 5-enolpyruvylshikimate-3-phosphate (EPSP) to yield chorismate, which is the branch point compound that serves as the starting substrate for the three terminal pathways of aromatic amino acid biosynthesis. This reaction introduces a second double bond into the aromatic ring system. In Rhodopseudomonas palustris (strain BisB18), this protein is Chorismate synthase.